A 1031-amino-acid polypeptide reads, in one-letter code: Receptor-like protein EIX1 (1031 aa).

Residues 1–29 (MDKWKYARLAQFLFTLSLLFLETSFGLGG) form the signal peptide. Asn-30 carries N-linked (GlcNAc...) asparagine glycosylation. The N-cap stretch occupies residues 30–113 (NKTLCLDKER…PRLTGKLSPS (84 aa)). Residues 30 to 971 (NKTLCLDKER…DEEEEFPSLE (942 aa)) lie on the Extracellular side of the membrane. The LRR 1 repeat unit spans residues 117–140 (LEYLNYLDLSVNEFERSEIPRFIG). The stretch at 142-165 (LKRLEYLNLSASFFSGVIPIQFQN) is one LRR 2; degenerate repeat. Asn-149 and Asn-165 each carry an N-linked (GlcNAc...) asparagine glycan. LRR repeat units lie at residues 166-189 (LTSLRTLDLGENNLIVKDLRWLSH), 191-215 (SSLEFLSLSSSNFQVNNWFQEITKV), 216-240 (PSLKELDLSGCGLSKLVPSQADLAN), and 243-266 (LISLSVLHLCCNEFSSSSEYSWVF). An N-linked (GlcNAc...) asparagine glycan is attached at Asn-240. N-linked (GlcNAc...) asparagine glycosylation is present at Asn-267. LRR repeat units lie at residues 269 to 292 (TTSLTSIDLLYNQLSGQIDDRFGT), 293 to 317 (LMYLEHLDLANNLKIEGGVPSSFGN), 318 to 341 (LTRLRHLDMSNTQTVQWLPELFLR), 346 to 369 (RKSLEVLGLNENSLFGSIVNATRF), 370 to 393 (SSLKKLYLQKNMLNGSFMESAGQV), 394 to 416 (STLEYLDLSENQMRGALPDLALF), 417 to 440 (PSLRELHLGSNQFRGRIPQGIGKL), 441 to 463 (SQLRILDVSSNRLEGLPESMGQL), 465 to 487 (NLESFDASYNVLKGTITESHLSN), 488 to 509 (LSSLVDLDLSFNSLALKTSFNW), 512 to 536 (PFQLQVISLPSCNLGPSFPKWLQNQ), 538 to 559 (NYTVLDISLASISDTLPSWFSS), 561 to 584 (PPDLKILNLSNNQISGRVSDLIEN), and 586 to 611 (YGYRVIDLSYNNFSGALPLVPTNVQI). Asn-317 is a glycosylation site (N-linked (GlcNAc...) asparagine). Residues Asn-365 and Asn-383 are each glycosylated (N-linked (GlcNAc...) asparagine). The N-linked (GlcNAc...) asparagine glycan is linked to Asn-487. N-linked (GlcNAc...) asparagine glycosylation is found at Asn-538, Asn-568, and Asn-597. One copy of the LRR 21; degenerate repeat lies at 612–629 (FYLHKNQFFGSISSICRS). LRR repeat units lie at residues 630 to 654 (RTSPTSLDLSHNQFSGELPDCWMNM), 655 to 678 (TSLAVLNLAYNNFSGEIPHSLGSL), 679 to 703 (TNLKALYIRQNSLSGMLPSFSQCQG), 705 to 725 (QILDLGGNKLTGSIPGWIGTD), 726 to 750 (LLNLRILSLRFNRLHGSIPSIICQL), and 752 to 773 (FLQILDLSANGLSGKIPHCFNN). N-linked (GlcNAc...) asparagine glycosylation is found at Asn-653 and Asn-666. 2 N-linked (GlcNAc...) asparagine glycosylation sites follow: Asn-773 and Asn-781. LRR repeat units lie at residues 823–847 (LLYLKTIDLSSNELIGGVPKEIADM), 848–871 (RGLKSLNLSRNELNGTVIEGIGQM), 872–895 (RMLESLDMSRNQLSGVIPQDLANL), and 896–918 (TFLSVLDLSNNQLSGRIPSSTQL). N-linked (GlcNAc...) asparagine glycans are attached at residues Asn-854, Asn-861, and Asn-894. The interval 919-971 (QSFDRSSYSDNAQLCGPPLQECPGYAPPSPLIDHGSNNNPQEHDEEEEFPSLE) is C-cap/acidic domain. A helical membrane pass occupies residues 972–992 (FYISMVLSFFVAFWGILGCLI). At 993-1031 (VNSSWRNAYFKFLTDTTSWLDMISRVWFARLKKKLRRAR) the chain is on the cytoplasmic side.

It belongs to the RLP family. Interacts with EIX elicitor protein.

It is found in the cell membrane. Its function is as follows. Involved in plant defense. Confers resistance to the fungal pathogen T.viride through recognition of the EIX elicitor protein. This Solanum lycopersicum (Tomato) protein is Receptor-like protein EIX1.